Consider the following 284-residue polypeptide: Protein phosphatase 1 regulatory subunit 3B (284 aa).

Residues 61–64 (RVSF) carry the PP1-binding motif motif. Residues 124–232 (RNRLQTNHVC…SNKGKNYRIT (109 aa)) form the CBM21 domain. S260 carries the phosphoserine modification.

As to quaternary structure, interacts with glycogen, PPP1CC catalytic subunit of PP1 and PYGL. Associates with glycogen particles. Forms complexes with debranching enzyme, glycogen phosphorylase, glycogen synthase and phosphorylase kinase which is necessary for its regulation of PP1 activity. As to expression, highly expressed in liver (at protein level). Expressed predominantly in liver. Expressed moderately in heart. Expressed weakly in prostate, stomach, thyroid, lung, kidney, spleen and skeletal muscle.

Acts as a glycogen-targeting subunit for phosphatase PP1. Facilitates interaction of the PP1 with enzymes of the glycogen metabolism and regulates its activity. Suppresses the rate at which PP1 dephosphorylates (inactivates) glycogen phosphorylase and enhances the rate at which it activates glycogen synthase and therefore limits glycogen breakdown. Its activity is inhibited by PYGL, resulting in inhibition of the glycogen synthase and glycogen phosphorylase phosphatase activities of PP1. Dramatically increases basal and insulin-stimulated glycogen synthesis upon overexpression in hepatocytes. The sequence is that of Protein phosphatase 1 regulatory subunit 3B (Ppp1r3b) from Mus musculus (Mouse).